The following is a 510-amino-acid chain: MSGFNDSPVPESAEKADGLLSQERGTQDPLVNTRKLFVKSYGCQMNVYDAERMADLLAPEGYAETSAPEDADLVILNTCHIREHAAEKVFSELGKLRLLKAEQQAAGRPVKIVVAGCVAQAEGEEILRRQKAVDLVVGPQSYHRLPDLLRRVAHTPGLVDTEFPAEDKFDHLVAPQPEKIAERGVGAFVTVQEGCDKFCSFCVVPYTRGAETSRPVEAILAEVETLIASGVREVTLIGQNVNAYHGFDAMTGAPASLASLMARVAAMPGLLRIRYTTSHPNDMGEDLIAAHRDIPALMPFLHLPVQSGSDKILAAMNRRHKAGDYLELIASIRAARPDIALSSDFIVGFPGETEADFEATLALIEQVGFASAFSFKYSQRPGTPGADRPDQIDEDVKAQRLARLQALLEEQRQAFNKAMIGRVLPVLFEKPGRHPGQIAGKTPYLQALYAEGDKALIGTVQPVEILEAGPNSFHGRLLARETGQESAQGQESAQGMERMEQNARAWEVPV.

The disordered stretch occupies residues 1–25 (MSGFNDSPVPESAEKADGLLSQERG). The region spanning 34–154 (RKLFVKSYGC…LPDLLRRVAH (121 aa)) is the MTTase N-terminal domain. [4Fe-4S] cluster-binding residues include Cys-43, Cys-79, Cys-117, Cys-195, Cys-199, and Cys-202. In terms of domain architecture, Radical SAM core spans 181–414 (AERGVGAFVT…QALLEEQRQA (234 aa)). One can recognise a TRAM domain in the interval 417-479 (KAMIGRVLPV…PNSFHGRLLA (63 aa)). Residues 484–493 (QESAQGQESA) show a composition bias toward polar residues. A disordered region spans residues 484 to 510 (QESAQGQESAQGMERMEQNARAWEVPV).

This sequence belongs to the methylthiotransferase family. MiaB subfamily. In terms of assembly, monomer. It depends on [4Fe-4S] cluster as a cofactor.

The protein localises to the cytoplasm. The enzyme catalyses N(6)-dimethylallyladenosine(37) in tRNA + (sulfur carrier)-SH + AH2 + 2 S-adenosyl-L-methionine = 2-methylsulfanyl-N(6)-dimethylallyladenosine(37) in tRNA + (sulfur carrier)-H + 5'-deoxyadenosine + L-methionine + A + S-adenosyl-L-homocysteine + 2 H(+). Its function is as follows. Catalyzes the methylthiolation of N6-(dimethylallyl)adenosine (i(6)A), leading to the formation of 2-methylthio-N6-(dimethylallyl)adenosine (ms(2)i(6)A) at position 37 in tRNAs that read codons beginning with uridine. The protein is tRNA-2-methylthio-N(6)-dimethylallyladenosine synthase of Beijerinckia indica subsp. indica (strain ATCC 9039 / DSM 1715 / NCIMB 8712).